The following is a 218-amino-acid chain: MADYSSLTVVQLKDLLTKRNLSVGGLKNELVQRLIKDDEESKGESEVSPQEQNQEQGSEPAAIEEPASQNITEKKEVSSEPKETNEPKEENKDVQKPSDGPSATASENEQAAASTAAPALSPEEIKAKALDLLNKKLHRANKFGQDQADIDSLQRQINRVEKFGVDLNSKLAEELGLVSRKNEPESGNNGKFKNRNKNANNRSRVSKNRRGNRSGYRR.

Residues 4–38 (YSSLTVVQLKDLLTKRNLSVGGLKNELVQRLIKDD) enclose the SAP domain. S22 is modified (phosphoserine). Disordered regions lie at residues 37–123 (DDEE…LSPE) and 177–218 (LVSR…GYRR). The segment covering 47 to 57 (VSPQEQNQEQG) has biased composition (polar residues). S58 and S68 each carry phosphoserine. Basic and acidic residues predominate over residues 72–96 (TEKKEVSSEPKETNEPKEENKDVQK). Composition is skewed to low complexity over residues 102 to 122 (SATA…ALSP) and 186 to 203 (SGNN…NNRS). The span at 204 to 218 (RVSKNRRGNRSGYRR) shows a compositional bias: basic residues.

This sequence belongs to the SAP domain-containing ribonucleoprotein family. In terms of assembly, interacts with SUB2 in the presence of RNA; this interaction facilitates RNA binding of SUB2.

Its function is as follows. Facilitates RNA binding of SUB2 and likely plays a role in mRNA export. Suppressor of the transcriptional defect of HPR1 by overexpression. In Saccharomyces cerevisiae (strain ATCC 204508 / S288c) (Baker's yeast), this protein is Protein THO1 (THO1).